The chain runs to 518 residues: uncharacterized protein (518 aa).

ABC transporter domains are found at residues 4–260 (LSVK…QLEA) and 324–518 (LIFE…TKVL). ATP is bound by residues 36-43 (GANGEGKS) and 357-364 (GANGIGKT).

It belongs to the ABC transporter superfamily.

This is an uncharacterized protein from Bacillus subtilis (strain 168).